Consider the following 160-residue polypeptide: MRCPYCQYEDTQVKDSRPAEEGAVIRRRRVCSVCGGRFTTFERVQLRELLITKKNGRCEPFDRDKLMRSVDVAVRKRNIDPDRIEQAISGIVRQLESLGEPEIASEKIGHLVMEALKGIDDIAYIRFASVYRDFRNASDFHDIIDELSKGIADTESRFDE.

The segment at 3–34 (CPYCQYEDTQVKDSRPAEEGAVIRRRRVCSVC) is a zinc-finger region. An ATP-cone domain is found at 49-139 (LLITKKNGRC…VYRDFRNASD (91 aa)).

This sequence belongs to the NrdR family. The cofactor is Zn(2+).

Functionally, negatively regulates transcription of bacterial ribonucleotide reductase nrd genes and operons by binding to NrdR-boxes. This chain is Transcriptional repressor NrdR, found in Bartonella tribocorum (strain CIP 105476 / IBS 506).